Consider the following 61-residue polypeptide: Probradykinin-1 (61 aa).

A signal peptide spans 1-22 (MSFLKKSLFLVLFLGLVSFSIC). Residues 23–48 (EEEKRETEEEENKDETEEQSEEKKRF) constitute a propeptide that is removed on maturation. Residues 24–61 (EEKRETEEEENKDETEEQSEEKKRFEPVPPGFTPFRLT) form a disordered region. A compositionally biased stretch (acidic residues) spans 30–42 (EEEENKDETEEQS).

The protein belongs to the frog skin active peptide (FSAP) family. Bradykinin-related peptide subfamily. Expressed by the skin glands.

It localises to the secreted. Functionally, may produce in vitro relaxation of rat arterial smooth muscle and constriction of intestinal smooth muscle. May target bradykinin receptors (BDKRB). This is Probradykinin-1 from Pithecopus azureus (Orange-legged monkey tree frog).